Consider the following 344-residue polypeptide: Glyceraldehyde-3-phosphate dehydrogenase (344 aa).

NAD(+) is bound by residues 11–12 and glycine 110; that span reads TI. D-glyceraldehyde 3-phosphate is bound at residue 139 to 141; the sequence is SCN. Cysteine 140 (nucleophile) is an active-site residue. Arginine 169 provides a ligand contact to NAD(+). D-glyceraldehyde 3-phosphate is bound at residue 195-196; sequence HG. Glutamine 302 is an NAD(+) binding site.

The protein belongs to the glyceraldehyde-3-phosphate dehydrogenase family. As to quaternary structure, homotetramer.

The protein localises to the cytoplasm. It catalyses the reaction D-glyceraldehyde 3-phosphate + phosphate + NADP(+) = (2R)-3-phospho-glyceroyl phosphate + NADPH + H(+). The catalysed reaction is D-glyceraldehyde 3-phosphate + phosphate + NAD(+) = (2R)-3-phospho-glyceroyl phosphate + NADH + H(+). It functions in the pathway carbohydrate degradation; glycolysis; pyruvate from D-glyceraldehyde 3-phosphate: step 1/5. The chain is Glyceraldehyde-3-phosphate dehydrogenase from Pyrobaculum islandicum (strain DSM 4184 / JCM 9189 / GEO3).